A 691-amino-acid chain; its full sequence is MARDFPLERVRNIGIAAHIDAGKTTTTERILFYSGVVHKIGEVHDGAAVTDWMAQERERGITITAAAISTSWQDHRINIIDTPGHVDFTIEVERSMRVLDGVIAVFCAVGGVQPQSETVWRQADRYSVPRMVFVNKMDRTGADFLKVNKQIKDRLKANALPIQLPIGAEGDLTGIIDLVANKAYLYKNDLGTDIEEAPIPSEMEEEAAEWRFKLMESVAENDEELIEIFLETGELSEEQLKKGIREGVLKHGLVPVLCGSAFKNKGVQLVLDAVVDYLPAPVDVKPIQGVLPSGKEDIRPSDDNAPFSALAFKVMSDPYGKLTFVRMYSGVLSKGSYVMNSTKDAKERISRLVILKADEREEVDELRAGDLGAVLGLKNTTTGDTLCNTEDPIVLETLFIPEPVISVAVEPKTKGDMEKLSKALTALSEEDPTFRVSTDPETNQTVIAGMGELHLEILVDRMLREFKVEANIGAPQVSYRETIRSSSKGEGKYARQTGGKGQYGHVIIEMEPAEVGKGFEFVNKIVGGAVPKEYIGPASNGMKETCESGVLAGYPLIDVKVTLVDGSFHDVDSSEMAFKIAGSMAFKDGVKKCNPVLLEPMMKVEVESPDDFLGSVIGDLSSRRGQVEGQSVDDGLSKVQAKVPLAEMFGYATQLRSMTQGRGIFSMEFANYEEVPRNVAEAIISKNQGNS.

The 275-residue stretch at 8–282 (ERVRNIGIAA…AVVDYLPAPV (275 aa)) folds into the tr-type G domain. GTP is bound by residues 17–24 (AHIDAGKT), 81–85 (DTPGH), and 135–138 (NKMD).

This sequence belongs to the TRAFAC class translation factor GTPase superfamily. Classic translation factor GTPase family. EF-G/EF-2 subfamily.

Its subcellular location is the cytoplasm. Catalyzes the GTP-dependent ribosomal translocation step during translation elongation. During this step, the ribosome changes from the pre-translocational (PRE) to the post-translocational (POST) state as the newly formed A-site-bound peptidyl-tRNA and P-site-bound deacylated tRNA move to the P and E sites, respectively. Catalyzes the coordinated movement of the two tRNA molecules, the mRNA and conformational changes in the ribosome. This Prochlorococcus marinus (strain AS9601) protein is Elongation factor G.